The chain runs to 134 residues: ATP synthase epsilon chain (134 aa).

Residues 100-134 are disordered; sequence NQKLQNENLSEEEKEHYEKQRSRSQALLNLASAKV. Positions 110 to 120 are enriched in basic and acidic residues; it reads EEEKEHYEKQR.

It belongs to the ATPase epsilon chain family. F-type ATPases have 2 components, CF(1) - the catalytic core - and CF(0) - the membrane proton channel. CF(1) has five subunits: alpha(3), beta(3), gamma(1), delta(1), epsilon(1). CF(0) has three main subunits: a, b and c.

It localises to the cell inner membrane. Functionally, produces ATP from ADP in the presence of a proton gradient across the membrane. This chain is ATP synthase epsilon chain, found in Sulfurihydrogenibium sp. (strain YO3AOP1).